The chain runs to 209 residues: Protein lin-28 homolog A (209 aa).

The tract at residues 1 to 31 is disordered; it reads MGSVSNQQFAGGCAKAAEKAPEEAPPDAARA. At Gly2 the chain carries N-acetylglycine. Ser3 carries the phosphoserine modification. In terms of domain architecture, CSD spans 39-112; sequence HGAGICKWFN…GLESIRVTGP (74 aa). A flexible linker region spans residues 113–136; sequence GGVFCIGSERRPKGKNMQKRRSKG. At Ser120 the chain carries Phosphoserine. 2 CCHC-type zinc fingers span residues 137-154 and 159-176; these read DRCYNCGGLDHHAKECKL and KKCHFCQSINHMVASCPL. The segment at 177–209 is disordered; the sequence is KAQQGPSSQGKPAYFREEEEEIHSPALLPEAQN. Ser200 is modified (phosphoserine).

The protein belongs to the lin-28 family. As to quaternary structure, monomer. During skeletal muscle differentiation, associated with translation initiation complexes in the polysomal compartment. Directly interacts with EIF3S2. Interacts with NCL in an RNA-dependent manner. Interacts with TUT4 in the presence of pre-let-7 RNA. Expressed in embryonic stem cells (ES cells), spermatagonia and testis. Expressed in numerous epithelial tissues including the epithelia of the small intestine, the intralobular duct epithelium of the mammary gland and the epithelia of Henle's loop in the kidney and in the collecting duct (at protein level). Also expressed in the myocardium and skeletal muscle (at protein level).

The protein resides in the cytoplasm. The protein localises to the rough endoplasmic reticulum. Its subcellular location is the P-body. It localises to the stress granule. It is found in the nucleus. The protein resides in the nucleolus. Its function is as follows. RNA-binding protein that inhibits processing of pre-let-7 miRNAs and regulates translation of mRNAs that control developmental timing, pluripotency and metabolism. Seems to recognize a common structural G-quartet (G4) feature in its miRNA and mRNA targets. 'Translational enhancer' that drives specific mRNAs to polysomes and increases the efficiency of protein synthesis. Its association with the translational machinery and target mRNAs results in an increased number of initiation events per molecule of mRNA and, indirectly, in mRNA stabilization. Binds IGF2 mRNA, MYOD1 mRNA, ARBP/36B4 ribosomal protein mRNA and its own mRNA. Essential for skeletal muscle differentiation program through the translational up-regulation of IGF2 expression. Suppressor of microRNA (miRNA) biogenesis, including that of let-7, miR107, miR-143 and miR-200c. Specifically binds the miRNA precursors (pre-miRNAs), recognizing an 5'-GGAG-3' motif found in pre-miRNA terminal loop, and recruits TUT4 and TUT7 uridylyltransferaseS. This results in the terminal uridylation of target pre-miRNAs. Uridylated pre-miRNAs fail to be processed by Dicer and undergo degradation. The repression of let-7 expression is required for normal development and contributes to maintain the pluripotent state by preventing let-7-mediated differentiation of embryonic stem cells. Localized to the periendoplasmic reticulum area, binds to a large number of spliced mRNAs and inhibits the translation of mRNAs destined for the ER, reducing the synthesis of transmembrane proteins, ER or Golgi lumen proteins, and secretory proteins. Binds to and enhances the translation of mRNAs for several metabolic enzymes, such as PFKP, PDHA1 or SDHA, increasing glycolysis and oxidative phosphorylation. Which, with the let-7 repression may enhance tissue repair in adult tissue. In Mus musculus (Mouse), this protein is Protein lin-28 homolog A (Lin28a).